Here is a 397-residue protein sequence, read N- to C-terminus: CCA-adding enzyme (397 aa).

2 residues coordinate ATP: G26 and R29. CTP is bound by residues G26 and R29. Mg(2+) contacts are provided by D39 and D41. ATP is bound by residues R110, D153, R156, R159, and R162. Residues R110, D153, R156, R159, and R162 each contribute to the CTP site.

The protein belongs to the tRNA nucleotidyltransferase/poly(A) polymerase family. Bacterial CCA-adding enzyme type 3 subfamily. As to quaternary structure, homodimer. Mg(2+) serves as cofactor.

It catalyses the reaction a tRNA precursor + 2 CTP + ATP = a tRNA with a 3' CCA end + 3 diphosphate. The enzyme catalyses a tRNA with a 3' CCA end + 2 CTP + ATP = a tRNA with a 3' CCACCA end + 3 diphosphate. Catalyzes the addition and repair of the essential 3'-terminal CCA sequence in tRNAs without using a nucleic acid template. Adds these three nucleotides in the order of C, C, and A to the tRNA nucleotide-73, using CTP and ATP as substrates and producing inorganic pyrophosphate. tRNA 3'-terminal CCA addition is required both for tRNA processing and repair. Also involved in tRNA surveillance by mediating tandem CCA addition to generate a CCACCA at the 3' terminus of unstable tRNAs. While stable tRNAs receive only 3'-terminal CCA, unstable tRNAs are marked with CCACCA and rapidly degraded. In Bacillus thuringiensis subsp. konkukian (strain 97-27), this protein is CCA-adding enzyme.